The following is a 264-amino-acid chain: Potassium channel regulatory protein (264 aa).

A BTB domain is found at 5 to 74 (DLVTLNVGGR…LRNHELLLPS (70 aa)).

In terms of assembly, can form homooligomers. Interacts with KCNA1 (via cytoplasmic N-terminal domain) and KCNA4.

The protein resides in the endoplasmic reticulum. Its function is as follows. Inhibits potassium fluxes in cells. May regulate Kv1 family channel proteins by retaining a fraction of channels in endomembranes. The protein is Potassium channel regulatory protein (Kcnrg) of Mus musculus (Mouse).